The chain runs to 609 residues: Tyrosyl-DNA phosphodiesterase 1 (609 aa).

Over residues 1–12 (MSQESSYGKWTI) the composition is skewed to polar residues. The interval 1 to 154 (MSQESSYGKW…EYETSGEGQD (154 aa)) is disordered. Phosphoserine occurs at positions 61, 119, and 132. Positions 127–143 (KVEDRSPPDSHRAQRAD) are enriched in basic and acidic residues. Threonine 148 carries the post-translational modification Phosphothreonine. Serine 149 bears the Phosphoserine mark. Histidine 264 (nucleophile) is an active-site residue. Lysine 266 is a substrate binding site. Residues 401–404 (SIGS) are interaction with DNA. Histidine 494 functions as the Proton donor/acceptor in the catalytic mechanism. Lysine 496 contributes to the substrate binding site.

This sequence belongs to the tyrosyl-DNA phosphodiesterase family. As to quaternary structure, monomer.

It is found in the nucleus. Its subcellular location is the cytoplasm. Functionally, DNA repair enzyme that can remove a variety of covalent adducts from DNA through hydrolysis of a 3'-phosphodiester bond, giving rise to DNA with a free 3' phosphate. Catalyzes the hydrolysis of dead-end complexes between DNA and the topoisomerase I active site tyrosine residue. Hydrolyzes 3'-phosphoglycolates on protruding 3' ends on DNA double-strand breaks due to DNA damage by radiation and free radicals. Acts on blunt-ended double-strand DNA breaks and on single-stranded DNA. Has low 3'exonuclease activity and can remove a single nucleoside from the 3'end of DNA and RNA molecules with 3'hydroxyl groups. Has no exonuclease activity towards DNA or RNA with a 3'phosphate. The sequence is that of Tyrosyl-DNA phosphodiesterase 1 (Tdp1) from Rattus norvegicus (Rat).